The following is a 102-amino-acid chain: Small ribosomal subunit protein eS24 (102 aa).

The protein belongs to the eukaryotic ribosomal protein eS24 family.

This chain is Small ribosomal subunit protein eS24, found in Methanobrevibacter smithii (strain ATCC 35061 / DSM 861 / OCM 144 / PS).